A 397-amino-acid polypeptide reads, in one-letter code: Argininosuccinate synthase (397 aa).

An ATP-binding site is contributed by 8–16 (AYSGGLDTS). Positions 86 and 91 each coordinate L-citrulline. G116 is an ATP binding site. 3 residues coordinate L-aspartate: T118, N122, and D123. Residue N122 coordinates L-citrulline. R126, S175, S184, E260, and Y272 together coordinate L-citrulline.

Belongs to the argininosuccinate synthase family. Type 1 subfamily. As to quaternary structure, homotetramer.

Its subcellular location is the cytoplasm. The enzyme catalyses L-citrulline + L-aspartate + ATP = 2-(N(omega)-L-arginino)succinate + AMP + diphosphate + H(+). It functions in the pathway amino-acid biosynthesis; L-arginine biosynthesis; L-arginine from L-ornithine and carbamoyl phosphate: step 2/3. This Clostridium botulinum (strain ATCC 19397 / Type A) protein is Argininosuccinate synthase.